A 529-amino-acid chain; its full sequence is Cytochrome P450 monooxygenase oblE (529 aa).

Residues 38–58 form a helical membrane-spanning segment; it reads WQYIVTLLIAIITYDQVMYIW. Heme is bound at residue C477.

The protein belongs to the cytochrome P450 family. Requires heme as cofactor.

Its subcellular location is the membrane. It participates in secondary metabolite biosynthesis; terpenoid biosynthesis. In terms of biological role, cytochrome P450 monooxygenase; part of the gene cluster that mediates the biosynthesis of the sesterterpenes ophiobolins, fungal phytotoxins with potential anti-cancer activities. The first step of the pathway is performed by the sesterterpene synthase oblA that possesses both prenyl transferase and terpene cyclase activity, converting isopentenyl diphosphate and dimethylallyl diphosphate into geranylfarnesyl diphosphate (GFPP) and further converting GFPP into ophiobolin F, respectively. Other sesterterpenoids (C(25) terpenoids) are found as minor products of oblA. The cytochrome P450 monooxygenase oblB then catalyzes a four-step oxidative transformation of ophiobolin F to yield ophiobolin C. The function of the cytochrome P450 monooxygenase oblE has still to be determined. The chain is Cytochrome P450 monooxygenase oblE from Emericella variicolor (Aspergillus stellatus).